The chain runs to 334 residues: Glyceraldehyde-3-phosphate dehydrogenase (334 aa).

NAD(+)-binding positions include threonine 12–isoleucine 13 and glycine 111. Serine 140–asparagine 142 serves as a coordination point for D-glyceraldehyde 3-phosphate. Cysteine 141 serves as the catalytic Nucleophile. An NAD(+)-binding site is contributed by arginine 167. Histidine 192–glycine 193 contacts D-glyceraldehyde 3-phosphate. Glutamine 298 is an NAD(+) binding site.

The protein belongs to the glyceraldehyde-3-phosphate dehydrogenase family. Homotetramer.

Its subcellular location is the cytoplasm. The catalysed reaction is D-glyceraldehyde 3-phosphate + phosphate + NADP(+) = (2R)-3-phospho-glyceroyl phosphate + NADPH + H(+). It carries out the reaction D-glyceraldehyde 3-phosphate + phosphate + NAD(+) = (2R)-3-phospho-glyceroyl phosphate + NADH + H(+). Its pathway is carbohydrate degradation; glycolysis; pyruvate from D-glyceraldehyde 3-phosphate: step 1/5. The sequence is that of Glyceraldehyde-3-phosphate dehydrogenase (gap) from Pyrococcus abyssi (strain GE5 / Orsay).